We begin with the raw amino-acid sequence, 283 residues long: Probable endonuclease 4 (283 aa).

Zn(2+)-binding residues include histidine 69, histidine 113, glutamate 148, aspartate 182, histidine 185, histidine 217, aspartate 230, histidine 232, and glutamate 262.

The protein belongs to the AP endonuclease 2 family. Requires Zn(2+) as cofactor.

It catalyses the reaction Endonucleolytic cleavage to 5'-phosphooligonucleotide end-products.. In terms of biological role, endonuclease IV plays a role in DNA repair. It cleaves phosphodiester bonds at apurinic or apyrimidinic (AP) sites, generating a 3'-hydroxyl group and a 5'-terminal sugar phosphate. The protein is Probable endonuclease 4 of Bifidobacterium longum (strain NCC 2705).